We begin with the raw amino-acid sequence, 186 residues long: Ribosome-recycling factor (186 aa).

It belongs to the RRF family.

Its subcellular location is the cytoplasm. Functionally, responsible for the release of ribosomes from messenger RNA at the termination of protein biosynthesis. May increase the efficiency of translation by recycling ribosomes from one round of translation to another. The sequence is that of Ribosome-recycling factor from Janthinobacterium sp. (strain Marseille) (Minibacterium massiliensis).